The sequence spans 471 residues: Nitrosourea synthase (471 aa).

Residues 177 to 328 are HO-like; it reads MWLVQFAPDF…GRMAREKIIK (152 aa). Residues Glu189, Glu215, His225, Glu281, His311, Asp315, His318, His407, His409, and His448 each contribute to the Fe(2+) site. Residues 397-459 form a cupin region; that stretch reads VEPRGELSNT…ANIESDECVY (63 aa).

Homodimer. Requires Fe(2+) as cofactor.

The catalysed reaction is N(omega)-methyl-L-arginine + 2 NADH + 3 O2 + H(+) = N(delta)-hydroxy-N(omega)-methyl-N(omega)-nitroso-L-citrulline + 2 NAD(+) + 3 H2O. It catalyses the reaction N(omega)-methyl-L-arginine + NADH + O2 + H(+) = N(delta)-hydroxy-N(omega)-methyl-L-arginine + NAD(+) + H2O. The enzyme catalyses N(delta)-hydroxy-N(omega)-methyl-L-arginine + NADH + O2 = N(delta),N(omega')-dihydroxy-N(omega)-methyl-L-arginine + NAD(+) + H2O. It carries out the reaction N(delta),N(omega')-dihydroxy-N(omega)-methyl-L-arginine + O2 = N(delta)-hydroxy-N(omega)-methyl-N(omega)-nitroso-L-citrulline + H2O. The catalysed reaction is 2 N(delta)-hydroxy-N(omega)-methyl-N(omega)-nitroso-L-citrulline + AH2 = 2 N(delta)-hydroxy-N(omega)-methyl-L-citrulline + 2 nitric oxide + A. The protein operates within antibiotic biosynthesis. Its function is as follows. Involved in the biosynthesis of the glucosamine-nitrosourea antibiotic streptozotocin (SZN). Catalyzes a complex multi-step reaction: the overall reaction is an oxidative rearrangement of the guanidine group of N(omega)-methyl-L-arginine (L-NMA), generating an N-nitrosourea product. SznF first hydroxylates L-NMA to form N(delta)-hydroxy-N(omega)-methyl-L-arginine (L-HMA), which is further hydroxylated to give N(delta)-hydroxy-N(omega)-hydroxy-N(omega)-methyl-L-arginine (L-DHMA). Subsequently, an oxidative rearrangement converts this intermediate to N(delta)-hydroxy-N(omega)-methyl-N(omega)-nitroso-L-citrulline. This product is unstable, and degrades non-enzymically into nitric oxide and the denitrosated product N(delta)-hydroxy-N(omega)-methyl-L-citrulline. The polypeptide is Nitrosourea synthase (Streptomyces achromogenes subsp. streptozoticus).